Consider the following 100-residue polypeptide: Succinate dehydrogenase assembly factor 4, mitochondrial (100 aa).

The transit peptide at 1–31 directs the protein to the mitochondrion; it reads MFNRNLRAVILKNYNKALTRCLHDAGNLKRP. The tract at residues 24-100 is disordered; the sequence is DAGNLKRPTP…YSYEGRVTDF (77 aa). Composition is skewed to basic and acidic residues over residues 36-68 and 85-100; these read LPKE…KDFE and PTVH…VTDF.

This sequence belongs to the SDHAF4 family. In terms of assembly, interacts with sdh1 in its FAD-bound form.

The protein resides in the mitochondrion matrix. Plays an essential role in the assembly of succinate dehydrogenase (SDH), an enzyme complex (also referred to as respiratory complex II) that is a component of both the tricarboxylic acid (TCA) cycle and the mitochondrial electron transport chain, and which couples the oxidation of succinate to fumarate with the reduction of ubiquinone (coenzyme Q) to ubiquinol. Binds to the flavoprotein subunit sdh1 in its FAD-bound form, blocking the generation of excess reactive oxygen species (ROS) and facilitating its assembly with the iron-sulfur protein subunit sdh2 into the SDH catalytic dimer. This is Succinate dehydrogenase assembly factor 4, mitochondrial from Schizosaccharomyces pombe (strain 972 / ATCC 24843) (Fission yeast).